The chain runs to 689 residues: Protein asunder (689 aa).

Residues 521-550 (NGARLKLSKAKDQYRLLYRELEQLIQLNAT) adopt a coiled-coil conformation. Disordered regions lie at residues 592–619 (PERL…SKRR) and 665–689 (GTKD…SVRS). Residues 599 to 614 (SSVGASGSSSSNSLLK) are compositionally biased toward low complexity. The Nuclear localization signal (NLS) motif lies at 613 to 619 (LKASKRR).

Belongs to the Integrator subunit 13 family. Belongs to the multiprotein complex Integrator, at least composed of IntS1, IntS2, IntS3, IntS4, omd/IntS5, IntS6, defl/IntS7, IntS8, IntS9, IntS10, IntS11, IntS12, asun/IntS13, IntS14 and IntS15. The core complex associates with protein phosphatase 2A subunits mts/PP2A and Pp2A-29B, to form the Integrator-PP2A (INTAC) complex. In terms of processing, phosphorylated. In terms of tissue distribution, expressed in nurse cells at stages 9-10 of oogenesis and exported to the oocyte. Also expressed in the follicle cells surrounding the oocyte.

The protein resides in the nucleus. It localises to the cytoplasm. It is found in the perinuclear region. Functionally, component of the integrator complex, a multiprotein complex that terminates RNA polymerase II (Pol II) transcription in the promoter-proximal region of genes. The integrator complex provides a quality checkpoint during transcription elongation by driving premature transcription termination of transcripts that are unfavorably configured for transcriptional elongation: the complex terminates transcription by (1) catalyzing dephosphorylation of the C-terminal domain (CTD) of Pol II subunit Polr2A/Rbp1 and Spt5, and (2) degrading the exiting nascent RNA transcript via endonuclease activity. The integrator complex is also involved in the 3'-end processing of the U7 snRNA, and also the spliceosomal snRNAs U1, U2, U4 and U5. Plays a role as a regulator of spermatogenesis. Crucial regulator of the mitotic cell cycle and development. Required for the correct dynein-dynactin perinuclear localization important for nucleus-centrosome coupling that occur upon meiotic progression of primary spermatocytes. Plays a role in sperm motility and fertility. May have a role in the PNG/PLU/GNU pathway. The sequence is that of Protein asunder from Drosophila melanogaster (Fruit fly).